A 449-amino-acid polypeptide reads, in one-letter code: UDP-N-acetylmuramoylalanine--D-glutamate ligase (449 aa).

G118–T124 is an ATP binding site.

It belongs to the MurCDEF family.

It localises to the cytoplasm. The enzyme catalyses UDP-N-acetyl-alpha-D-muramoyl-L-alanine + D-glutamate + ATP = UDP-N-acetyl-alpha-D-muramoyl-L-alanyl-D-glutamate + ADP + phosphate + H(+). It participates in cell wall biogenesis; peptidoglycan biosynthesis. Cell wall formation. Catalyzes the addition of glutamate to the nucleotide precursor UDP-N-acetylmuramoyl-L-alanine (UMA). The protein is UDP-N-acetylmuramoylalanine--D-glutamate ligase of Staphylococcus haemolyticus (strain JCSC1435).